Consider the following 558-residue polypeptide: uncharacterized protein (558 aa).

5 helical membrane-spanning segments follow: residues 15 to 32 (PSVT…ALGL), 39 to 61 (IGTI…HFGV), 76 to 95 (LVIF…FPSL), 104 to 126 (LISL…ILGI), and 166 to 188 (MALA…LALL). RCK C-terminal domains follow at residues 196–278 (EERD…LFGK) and 286–370 (RPDI…ILGD). Helical transmembrane passes span 383–405 (LFGG…GVSM), 409–426 (LGLA…GAFG), 446–468 (FGII…DTII), 473–495 (LLWV…WASI), and 533–555 (VVYA…IMIL).

This sequence belongs to the AAE transporter (TC 2.A.81) family.

It localises to the cell membrane. This is an uncharacterized protein from Porphyromonas gingivalis (strain ATCC BAA-308 / W83).